An 86-amino-acid polypeptide reads, in one-letter code: Large ribosomal subunit protein bL27 (86 aa).

The segment at 1–21 is disordered; it reads MAHKKGASSSRNGRDSAAQRL.

It belongs to the bacterial ribosomal protein bL27 family.

This is Large ribosomal subunit protein bL27 (rpmA) from Mycobacterium tuberculosis (strain CDC 1551 / Oshkosh).